Reading from the N-terminus, the 296-residue chain is Cobalamin trafficking protein CblD (296 aa).

A mitochondrion-targeting transit peptide spans 1–38; the sequence is MANVLCNRARLVSYLPGFCSLVKRVVNPKAFSTAGSSG. Lys-203 carries the post-translational modification N6-acetyllysine.

Heterodimer with MMACHC. Forms a multiprotein complex with MMACHC, MTR and MTRR. As to expression, widely expressed at high levels.

It localises to the cytoplasm. The protein resides in the mitochondrion. Functionally, involved in cobalamin metabolism and trafficking. Plays a role in regulating the biosynthesis and the proportion of two coenzymes, methylcob(III)alamin (MeCbl) and 5'-deoxyadenosylcobalamin (AdoCbl). Promotes oxidation of cob(II)alamin bound to MMACHC. The processing of cobalamin in the cytosol occurs in a multiprotein complex composed of at least MMACHC, MMADHC, MTRR (methionine synthase reductase) and MTR (methionine synthase) which may contribute to shuttle safely and efficiently cobalamin towards MTR in order to produce methionine. In Homo sapiens (Human), this protein is Cobalamin trafficking protein CblD.